A 72-amino-acid polypeptide reads, in one-letter code: Large ribosomal subunit protein uL29 (72 aa).

It belongs to the universal ribosomal protein uL29 family.

The sequence is that of Large ribosomal subunit protein uL29 (rpmC) from Chlamydia pneumoniae (Chlamydophila pneumoniae).